Here is a 210-residue protein sequence, read N- to C-terminus: Ribosomal RNA small subunit methyltransferase G (210 aa).

S-adenosyl-L-methionine-binding positions include G76, L81, 127–128 (VE), and R142.

Belongs to the methyltransferase superfamily. RNA methyltransferase RsmG family.

Its subcellular location is the cytoplasm. It carries out the reaction guanosine(527) in 16S rRNA + S-adenosyl-L-methionine = N(7)-methylguanosine(527) in 16S rRNA + S-adenosyl-L-homocysteine. Its function is as follows. Specifically methylates the N7 position of guanine in position 527 of 16S rRNA. The protein is Ribosomal RNA small subunit methyltransferase G of Vibrio atlanticus (strain LGP32) (Vibrio splendidus (strain Mel32)).